The primary structure comprises 271 residues: Zinc finger protein 501 (271 aa).

9 consecutive C2H2-type zinc fingers follow at residues 22–44 (SKCSECGKFFTQRSSLTQHQRIH), 50–72 (YVCSECGSCFRKQSNLTQHLRIH), 78–100 (YKCNECEKAFQTKAILVQHLRIH), 106–128 (YKCNECGKAFCQSPSLIKHQRIH), 134–156 (YKCTECGKAFSQSICLTRHQRSH), 162–184 (FKCNECGKAFNQSACLMQHQRIH), 190–212 (YTCTECGKAFTQNSSLVEHERTH), 218–240 (YKCSECEKTFRKQAHLSEHYRIH), and 246–268 (YECVGCGKSFRHSSALLRHQRLH).

This sequence belongs to the krueppel C2H2-type zinc-finger protein family.

Its subcellular location is the nucleus. The protein localises to the nucleolus. In terms of biological role, may be involved in transcriptional regulation. Essential for Golgi structural integrity. The protein is Zinc finger protein 501 (ZNF501) of Homo sapiens (Human).